A 403-amino-acid chain; its full sequence is Argininosuccinate synthase (403 aa).

Residues 12–20 (AYSGGLDTS) and Ala-39 each bind ATP. Tyr-91 provides a ligand contact to L-citrulline. An ATP-binding site is contributed by Gly-121. L-aspartate-binding residues include Thr-123, Asn-127, and Asp-128. Asn-127 lines the L-citrulline pocket. The L-citrulline site is built by Arg-131, Ser-180, Ser-189, Glu-265, and Tyr-277.

Belongs to the argininosuccinate synthase family. Type 1 subfamily. As to quaternary structure, homotetramer.

It is found in the cytoplasm. It carries out the reaction L-citrulline + L-aspartate + ATP = 2-(N(omega)-L-arginino)succinate + AMP + diphosphate + H(+). It functions in the pathway amino-acid biosynthesis; L-arginine biosynthesis; L-arginine from L-ornithine and carbamoyl phosphate: step 2/3. The chain is Argininosuccinate synthase from Buchnera aphidicola subsp. Acyrthosiphon pisum (strain 5A).